The primary structure comprises 53 residues: Large ribosomal subunit protein bL33B (53 aa).

The protein belongs to the bacterial ribosomal protein bL33 family.

The protein is Large ribosomal subunit protein bL33B of Sorangium cellulosum (strain So ce56) (Polyangium cellulosum (strain So ce56)).